The primary structure comprises 364 residues: Protein FAM81A (364 aa).

Coiled-coil stretches lie at residues 75–107 (FLEEHIRNITAIVKQLNRDIEVLQEQIRARDNI), 158–189 (NKEQQAAKLILETKIKDAEGQISQLLSRVDLS), and 261–287 (ANERDVEKKLSQMSARLDKIEESQKRN). The disordered stretch occupies residues 281–300 (EESQKRNAEGQRKPDEEKVH).

Belongs to the FAM81 family. In terms of assembly, interacts with DLG4/PSD-95, GRIN2B/GLUN2B and SYNGAP1; the interactions facilitate condensate formation. Expressed in most regions of the brain (at protein level).

The protein localises to the postsynaptic density. It is found in the cytoplasm. Facilitates the interaction and assembly of proteins within the postsynaptic density by promoting the condensation of postsynaptic proteins via liquid-liquid phase separation. Required for neuronal activity. Accumulation at the postsynaptic density results in enlargement of dendritic spines. In Mus musculus (Mouse), this protein is Protein FAM81A (Fam81a).